Reading from the N-terminus, the 181-residue chain is Isopentenyl-diphosphate Delta-isomerase (181 aa).

Residues His24 and His30 each contribute to the Mn(2+) site. The Nudix hydrolase domain maps to 28-168 (LLHLAFSVLL…PDTFSVWFPT (141 aa)). Residue Cys68 is part of the active site. Residue His70 participates in Mn(2+) binding. Glu88 is a Mg(2+) binding site. Positions 117 and 119 each coordinate Mn(2+). Residue Glu119 is part of the active site.

This sequence belongs to the IPP isomerase type 1 family. Mg(2+) is required as a cofactor. Mn(2+) serves as cofactor.

It is found in the cytoplasm. The enzyme catalyses isopentenyl diphosphate = dimethylallyl diphosphate. It functions in the pathway isoprenoid biosynthesis; dimethylallyl diphosphate biosynthesis; dimethylallyl diphosphate from isopentenyl diphosphate: step 1/1. Catalyzes the 1,3-allylic rearrangement of the homoallylic substrate isopentenyl (IPP) to its highly electrophilic allylic isomer, dimethylallyl diphosphate (DMAPP). This chain is Isopentenyl-diphosphate Delta-isomerase, found in Aliivibrio fischeri (strain MJ11) (Vibrio fischeri).